The sequence spans 371 residues: UDP-N-acetylglucosamine--N-acetylmuramyl-(pentapeptide) pyrophosphoryl-undecaprenol N-acetylglucosamine transferase (371 aa).

UDP-N-acetyl-alpha-D-glucosamine is bound by residues 15–17, Asn-126, Arg-172, Ser-199, Ile-256, 275–280, and Gln-301; these read TGG and ALTVSE.

This sequence belongs to the glycosyltransferase 28 family. MurG subfamily.

It is found in the cell inner membrane. It carries out the reaction di-trans,octa-cis-undecaprenyl diphospho-N-acetyl-alpha-D-muramoyl-L-alanyl-D-glutamyl-meso-2,6-diaminopimeloyl-D-alanyl-D-alanine + UDP-N-acetyl-alpha-D-glucosamine = di-trans,octa-cis-undecaprenyl diphospho-[N-acetyl-alpha-D-glucosaminyl-(1-&gt;4)]-N-acetyl-alpha-D-muramoyl-L-alanyl-D-glutamyl-meso-2,6-diaminopimeloyl-D-alanyl-D-alanine + UDP + H(+). It functions in the pathway cell wall biogenesis; peptidoglycan biosynthesis. Functionally, cell wall formation. Catalyzes the transfer of a GlcNAc subunit on undecaprenyl-pyrophosphoryl-MurNAc-pentapeptide (lipid intermediate I) to form undecaprenyl-pyrophosphoryl-MurNAc-(pentapeptide)GlcNAc (lipid intermediate II). The sequence is that of UDP-N-acetylglucosamine--N-acetylmuramyl-(pentapeptide) pyrophosphoryl-undecaprenol N-acetylglucosamine transferase from Francisella tularensis subsp. mediasiatica (strain FSC147).